We begin with the raw amino-acid sequence, 104 residues long: PTS system lactose-specific EIIA component (104 aa).

Residues 1-102 form the PTS EIIA type-3 domain; sequence MNRDEVQLLG…MKHLIELYKK (102 aa). Residue His-78 is the Tele-phosphohistidine intermediate of the active site. His-78 bears the Phosphohistidine; by HPr mark. Position 81 (Asp-81) interacts with Mg(2+).

As to quaternary structure, homotrimer. Mg(2+) is required as a cofactor.

The protein localises to the cytoplasm. Its function is as follows. The phosphoenolpyruvate-dependent sugar phosphotransferase system (sugar PTS), a major carbohydrate active transport system, catalyzes the phosphorylation of incoming sugar substrates concomitantly with their translocation across the cell membrane. The enzyme II LacEF PTS system is involved in lactose transport. This chain is PTS system lactose-specific EIIA component, found in Staphylococcus epidermidis (strain ATCC 35984 / DSM 28319 / BCRC 17069 / CCUG 31568 / BM 3577 / RP62A).